A 179-amino-acid chain; its full sequence is Ribosome maturation factor RimM (179 aa).

A PRC barrel domain is found at 98 to 170; that stretch reads PDEFWDRRLR…RIVVSGIPGL (73 aa).

Belongs to the RimM family. Binds ribosomal protein uS19.

It localises to the cytoplasm. Functionally, an accessory protein needed during the final step in the assembly of 30S ribosomal subunit, possibly for assembly of the head region. Essential for efficient processing of 16S rRNA. May be needed both before and after RbfA during the maturation of 16S rRNA. It has affinity for free ribosomal 30S subunits but not for 70S ribosomes. This Cutibacterium acnes (strain DSM 16379 / KPA171202) (Propionibacterium acnes) protein is Ribosome maturation factor RimM.